The sequence spans 81 residues: Defensin-like protein 144 (81 aa).

Residues 1-24 (MKNSFRFSFTVITTFIICVLVSGA) form the signal peptide. Disulfide bonds link cysteine 30-cysteine 74, cysteine 42-cysteine 61, cysteine 47-cysteine 69, and cysteine 51-cysteine 71.

The protein belongs to the DEFL family.

The protein resides in the secreted. The protein is Defensin-like protein 144 (LCR10) of Arabidopsis thaliana (Mouse-ear cress).